Here is a 71-residue protein sequence, read N- to C-terminus: Natterin-P (71 aa).

Residues 1–18 (MKLLVLLVTLLVLSWTSA) form the signal peptide. Residues 19 to 45 (EDLGDQEILENNEDNNHESELGEPAAQ) constitute a propeptide that is removed on maturation. Residues 22–31 (GDQEILENNE) show a composition bias toward acidic residues. A disordered region spans residues 22 to 54 (GDQEILENNEDNNHESELGEPAAQHTDDETSQL). Cysteines 62 and 71 form a disulfide.

It belongs to the natterin family. As to expression, expressed by the venom gland.

It localises to the secreted. Inhibited by tissue-kallikrein inhibitor TKI and trasylol. Plasma kallikrein inhibitor PKSI527 and classical inhibitors of serine-, metallo-, thiol- or aspartate-peptidases evokes a minor inhibition of the peptide digestion. In terms of biological role, shows nociceptive, edema-inducing and kininogenase activity with release of kallidin from low molecular weight kininogen. The cleavage occurs at Met-Lys bonds. The protein is Natterin-P of Thalassophryne nattereri (Copper Joe toadfish).